A 727-amino-acid polypeptide reads, in one-letter code: Centrosomal protein kizuna (727 aa).

The disordered stretch occupies residues 1–20 (MTERSGRGGGTRGASALPSP). A coiled-coil region spans residues 77–124 (KNARIRNQEYLKQFERIQANITASLEKLQELKIEFETQIKKMQLLSKD). Disordered stretches follow at residues 176–226 (DFTT…NKSD), 271–456 (EGKK…FTNL), and 564–727 (RLAV…PRTP). Over residues 198-223 (HQQTAQSSDVTGSRVVQTPGDTQCLN) the composition is skewed to polar residues. Residues 286-324 (LSPENRTTDLKCDSSRRSEGSEGEILTREHIEVEEERAR) show a composition bias toward basic and acidic residues. The residue at position 328 (S328) is a Phosphoserine. The segment covering 343 to 359 (PQEKPPARKASSDHLPC) has biased composition (basic and acidic residues). Residues 380–390 (LSSSSDLTVSV) are compositionally biased toward low complexity. T387 carries the phosphothreonine; by PLK1 modification. A compositionally biased stretch (polar residues) spans 442 to 455 (APSTPDSPNESFTN). A compositionally biased stretch (low complexity) spans 569-583 (SSKSSCSLPSTPSDE). Positions 603–613 (QEDESREESTE) are enriched in acidic residues. Over residues 631-642 (LKQSALQGSTHQ) the composition is skewed to polar residues. Low complexity-rich tracts occupy residues 659–669 (GLKTGSGTFKT) and 677–689 (SEAS…GSPL). Phosphoserine occurs at positions 711, 714, and 716.

This sequence belongs to the kizuna family. In terms of assembly, interacts with AKAP9, CEP72, ODF2, PCNT and TUBGCP2. Post-translationally, phosphorylation at Thr-387 by PLK1 is not needed for centrosomal localization or pericentriolar material expansion but is indispensable for spindle-pole stabilization.

It is found in the cytoplasm. The protein resides in the cytoskeleton. The protein localises to the microtubule organizing center. It localises to the centrosome. Its subcellular location is the cilium basal body. In terms of biological role, centrosomal protein required for establishing a robust mitotic centrosome architecture that can endure the forces that converge on the centrosomes during spindle formation. Required for stabilizing the expanded pericentriolar material around the centriole. The chain is Centrosomal protein kizuna (KIZ) from Bos taurus (Bovine).